Here is a 544-residue protein sequence, read N- to C-terminus: Membrane protein insertase YidC (544 aa).

Helical transmembrane passes span leucine 15–phenylalanine 35, leucine 321–proline 341, tryptophan 343–phenylalanine 363, leucine 409–valine 429, and methionine 506–isoleucine 526.

It belongs to the OXA1/ALB3/YidC family. Type 1 subfamily. In terms of assembly, interacts with the Sec translocase complex via SecD. Specifically interacts with transmembrane segments of nascent integral membrane proteins during membrane integration.

It is found in the cell inner membrane. In terms of biological role, required for the insertion and/or proper folding and/or complex formation of integral membrane proteins into the membrane. Involved in integration of membrane proteins that insert both dependently and independently of the Sec translocase complex, as well as at least some lipoproteins. Aids folding of multispanning membrane proteins. This chain is Membrane protein insertase YidC, found in Borrelia garinii subsp. bavariensis (strain ATCC BAA-2496 / DSM 23469 / PBi) (Borreliella bavariensis).